The chain runs to 1365 residues: Glucosyltransferase-S (1365 aa).

The or 37 signal peptide spans 1–36 (MEKNLRYKLHKVKKQWVAIGVTTVTLSFLAGGQVVA). Polar residues-rich tracts occupy residues 80-89 (DQTATSQVSP) and 127-146 (RQSAADTSTDGKAVPQTSDQ). 2 disordered regions span residues 80–99 (DQTATSQVSPATDGRVDNQV) and 127–152 (RQSAADTSTDGKAVPQTSDQPGHLET). Cell wall-binding repeat units lie at residues 146 to 166 (QPGHLETVDGKTYYVDANGQR) and 168 to 187 (KNYSMVIDGKTYYFDGQTGE). A catalytic; approximate region spans residues 200 to 1000 (QDNVPDSYQA…KPIDPSVKIT (801 aa)). 10 Cell wall-binding repeats span residues 1052-1071 (ANGFISKNGGIHYLDKNGQE), 1073-1092 (KNRFKEISGSWYYFDSDGKM), 1093-1112 (ATGKTKIGNDTYLFMPNGKQ), 1113-1133 (LKEGVWYDGKKAYYYDDNGRT), 1136-1159 (NKGFVEFRVDGQDKWRYFNGDGTI), 1160-1179 (AIGLVSLDNRTLYFDAYGYQ), 1234-1253 (LTGEQTIDGQKVFFQDNGVQ), 1278-1298 (GKGWYSTSDDNWVYVNESGQV), 1299-1318 (LTGLQTIDGQTVYFDDKGIQ), and 1343-1362 (RDRWKNVDGNWYYFNRNGLA).

Belongs to the glycosyl hydrolase 70 family.

The catalysed reaction is [(1-&gt;6)-alpha-D-glucosyl](n) + sucrose = [(1-&gt;6)-alpha-D-glucosyl](n+1) + D-fructose. With respect to regulation, glucan synthesis by GTF-S is independent of primer glucan unlike GTF-I. Production of extracellular glucans, that are thought to play a key role in the development of the dental plaque because of their ability to adhere to smooth surfaces and mediate the aggregation of bacterial cells and food debris. In Streptococcus downei (Streptococcus sobrinus), this protein is Glucosyltransferase-S (gtfS).